A 291-amino-acid chain; its full sequence is Pyridoxal 5'-phosphate synthase subunit PdxS (291 aa).

Asp23 contacts D-ribose 5-phosphate. Lys80 acts as the Schiff-base intermediate with D-ribose 5-phosphate in catalysis. Position 152 (Gly152) interacts with D-ribose 5-phosphate. Residue Arg164 coordinates D-glyceraldehyde 3-phosphate. Residues Gly213 and 234 to 235 (GS) each bind D-ribose 5-phosphate.

It belongs to the PdxS/SNZ family. As to quaternary structure, in the presence of PdxT, forms a dodecamer of heterodimers.

The enzyme catalyses aldehydo-D-ribose 5-phosphate + D-glyceraldehyde 3-phosphate + L-glutamine = pyridoxal 5'-phosphate + L-glutamate + phosphate + 3 H2O + H(+). The protein operates within cofactor biosynthesis; pyridoxal 5'-phosphate biosynthesis. Functionally, catalyzes the formation of pyridoxal 5'-phosphate from ribose 5-phosphate (RBP), glyceraldehyde 3-phosphate (G3P) and ammonia. The ammonia is provided by the PdxT subunit. Can also use ribulose 5-phosphate and dihydroxyacetone phosphate as substrates, resulting from enzyme-catalyzed isomerization of RBP and G3P, respectively. This is Pyridoxal 5'-phosphate synthase subunit PdxS from Desulfitobacterium hafniense (strain DSM 10664 / DCB-2).